Here is a 793-residue protein sequence, read N- to C-terminus: DnaJ homolog subfamily C member 10 (793 aa).

An N-terminal signal peptide occupies residues 1-32; the sequence is MGVWLNKDDFIRDLKRISLCLLILYVVVVVGT. The J domain occupies 35–100; sequence NFYSLLGVSK…DLRKKYDKYG (66 aa). One can recognise a Thioredoxin 1 domain in the interval 130–232; that stretch reads EIITLERREF…ESLVAFAMQH (103 aa). Cysteine 158 and cysteine 161 are joined by a disulfide. Trxb regions lie at residues 235-350 and 348-463; these read STVT…LPDF and PDFE…PQNF. Thioredoxin domains lie at 454-553, 557-665, and 671-776; these read HVTT…IEDL, SVVS…SWGL, and ASID…ALIY. The cysteines at positions 480 and 483 are disulfide-linked. Asparagine 530 carries an N-linked (GlcNAc...) asparagine glycan. 2 cysteine pairs are disulfide-bonded: cysteine 588-cysteine 591 and cysteine 700-cysteine 703. The Prevents secretion from ER signature appears at 790–793; it reads KDEL.

Interacts with HSPA5 (via its J domain). Interacts with EDEM1. In terms of tissue distribution, ubiquitous. Particularly abundant in secretory tissues. Ubiquitous in fetal tissues and tumor tissues. Higher expression in fetal tissues than in adult tissues. Expressed in testis, pancreas, fetal thymus and fetal kidney. High expression in heart, liver, kidney, and testis. Low expression in spleen and skeletal muscle.

Its subcellular location is the endoplasmic reticulum lumen. Its function is as follows. Endoplasmic reticulum disulfide reductase involved both in the correct folding of proteins and degradation of misfolded proteins. Required for efficient folding of proteins in the endoplasmic reticulum by catalyzing the removal of non-native disulfide bonds formed during the folding of proteins, such as LDLR. Also involved in endoplasmic reticulum-associated degradation (ERAD) by reducing incorrect disulfide bonds in misfolded glycoproteins recognized by EDEM1. Interaction with HSPA5 is required its activity, not for the disulfide reductase activity, but to facilitate the release of DNAJC10 from its substrate. Promotes apoptotic signaling pathway in response to endoplasmic reticulum stress. The protein is DnaJ homolog subfamily C member 10 (Dnajc10) of Mus musculus (Mouse).